Reading from the N-terminus, the 49-residue chain is Large ribosomal subunit protein bL33 (49 aa).

Belongs to the bacterial ribosomal protein bL33 family.

The sequence is that of Large ribosomal subunit protein bL33 from Desulforamulus reducens (strain ATCC BAA-1160 / DSM 100696 / MI-1) (Desulfotomaculum reducens).